A 656-amino-acid chain; its full sequence is Leucine-rich repeat-containing protein 43 (656 aa).

Acidic residues predominate over residues 1-13 (MEASYESESESES). The interval 1–25 (MEASYESESESESEAGPGTQRPGTG) is disordered. LRR repeat units lie at residues 150-170 (KLEE…TNLP), 172-193 (TLKV…CAHP), 196-215 (GLQH…ESLY), and 223-244 (NLVS…VTSL). Residues 258 to 296 (NPLALVPYYRGLTIDSLAQLCVLDDITVSPNEKHLFRGL) form the LRRCT domain. A disordered region spans residues 512-554 (LSAKKGKGEKDKKGKEKDRTGKGEKEPAKEWKVLKKKKEPPKE). The span at 517–544 (GKGEKDKKGKEKDRTGKGEKEPAKEWKV) shows a compositional bias: basic and acidic residues.

The chain is Leucine-rich repeat-containing protein 43 (LRRC43) from Homo sapiens (Human).